We begin with the raw amino-acid sequence, 145 residues long: Ribosomal RNA large subunit methyltransferase H (145 aa).

S-adenosyl-L-methionine contacts are provided by residues Leu-64, Gly-93, and 112–117 (LSPLTF).

It belongs to the RNA methyltransferase RlmH family. As to quaternary structure, homodimer.

The protein localises to the cytoplasm. The catalysed reaction is pseudouridine(1915) in 23S rRNA + S-adenosyl-L-methionine = N(3)-methylpseudouridine(1915) in 23S rRNA + S-adenosyl-L-homocysteine + H(+). In terms of biological role, specifically methylates the pseudouridine at position 1915 (m3Psi1915) in 23S rRNA. The chain is Ribosomal RNA large subunit methyltransferase H from Prochlorococcus marinus (strain NATL2A).